We begin with the raw amino-acid sequence, 162 residues long: Large ribosomal subunit protein uL10 (162 aa).

It belongs to the universal ribosomal protein uL10 family. Part of the ribosomal stalk of the 50S ribosomal subunit. The N-terminus interacts with L11 and the large rRNA to form the base of the stalk. The C-terminus forms an elongated spine to which L12 dimers bind in a sequential fashion forming a multimeric L10(L12)X complex.

Functionally, forms part of the ribosomal stalk, playing a central role in the interaction of the ribosome with GTP-bound translation factors. The polypeptide is Large ribosomal subunit protein uL10 (Acholeplasma laidlawii (strain PG-8A)).